Consider the following 556-residue polypeptide: Adenine deaminase (556 aa).

It belongs to the metallo-dependent hydrolases superfamily. Adenine deaminase family. Mn(2+) is required as a cofactor.

It catalyses the reaction adenine + H2O + H(+) = hypoxanthine + NH4(+). The protein is Adenine deaminase of Archaeoglobus fulgidus (strain ATCC 49558 / DSM 4304 / JCM 9628 / NBRC 100126 / VC-16).